Consider the following 199-residue polypeptide: Transgelin-3 (199 aa).

Residues 24-136 form the Calponin-homology (CH) domain; the sequence is ADLENKLVDW…RTLMALGSVA (113 aa). Residue S163 is modified to Phosphoserine. One copy of the Calponin-like repeat lies at 174–199; that stretch reads IGLQMGSNKGASQAGMTGYGMPRQIM. A compositionally biased stretch (polar residues) spans 178–188; sequence MGSNKGASQAG. The segment at 178–199 is disordered; it reads MGSNKGASQAGMTGYGMPRQIM.

The protein belongs to the calponin family. As to expression, abundant and ubiquitous expression in neurons.

The protein is Transgelin-3 (Tagln3) of Rattus norvegicus (Rat).